The primary structure comprises 358 residues: Phosphate acyltransferase (358 aa).

The tract at residues S336–A358 is disordered.

The protein belongs to the PlsX family. In terms of assembly, homodimer. Probably interacts with PlsY.

The protein localises to the cytoplasm. The catalysed reaction is a fatty acyl-[ACP] + phosphate = an acyl phosphate + holo-[ACP]. The protein operates within lipid metabolism; phospholipid metabolism. In terms of biological role, catalyzes the reversible formation of acyl-phosphate (acyl-PO(4)) from acyl-[acyl-carrier-protein] (acyl-ACP). This enzyme utilizes acyl-ACP as fatty acyl donor, but not acyl-CoA. This Cupriavidus pinatubonensis (strain JMP 134 / LMG 1197) (Cupriavidus necator (strain JMP 134)) protein is Phosphate acyltransferase.